Reading from the N-terminus, the 730-residue chain is Protein folded gastrulation (730 aa).

Residues 1 to 21 (MSPPNCLLAVLALTVFIGANN) form the signal peptide. Residues N51 and N193 are each glycosylated (N-linked (GlcNAc...) asparagine). Over residues 197 to 211 (TPETSTSITPTSTTT) the composition is skewed to low complexity. Residues 197–222 (TPETSTSITPTSTTTFAVPSVPSGEA) form a disordered region. Residues N252 and N289 are each glycosylated (N-linked (GlcNAc...) asparagine). Residues 361-385 (ELEEEVGEEEVTATDILPSEEDEYT) are compositionally biased toward acidic residues. Positions 361–424 (ELEEEVGEEE…SPHPPEEPEI (64 aa)) are disordered. Over residues 386-415 (TETATTTGDTTVAEASMDTSTATSTSGQSS) the composition is skewed to low complexity. A glycan (N-linked (GlcNAc...) asparagine) is linked at N459. 2 disordered regions span residues 474-526 (EDES…GGHK) and 545-583 (KGKQ…TTTT). Residues 478–491 (STTTATPEPSSSTP) are compositionally biased toward low complexity. A compositionally biased stretch (polar residues) spans 504–513 (DNDNLMTNTI). Low complexity predominate over residues 567 to 583 (TSALTSTSTEDATTTTT). Residues N590 and N639 are each glycosylated (N-linked (GlcNAc...) asparagine). A compositionally biased stretch (low complexity) spans 663 to 676 (SAASTESAGTAATT). The interval 663 to 683 (SAASTESAGTAATTPNSSSNP) is disordered. N678 carries an N-linked (GlcNAc...) asparagine glycan.

May be highly O-glycosylated in its Ser/Thr-rich C-terminal part. Expressed in the invagination primordia in a pattern that precisely precedes the pattern of constrictions.

The protein localises to the secreted. The protein resides in the extracellular space. It localises to the extracellular matrix. Coordinates cell shape changes during formation of the ventral furrow and invagination of the posterior midgut primordium, by inducing apical constriction of cells in spatially and temporally defined manners. Could function as a secreted signal to initiate apical constriction by acting as a ligand for an unidentified G protein-coupled receptor, which in turn activates the G protein alpha subunit encoded by concertina, in neighboring cells. Such an intracellular pathway would ultimately induce contraction of the apical actin-myosin network. In the ventral furrow, fog appears to ensure that all the cells initiate constriction within several minutes of each other. In the posterior midgut invagination, fog appears to direct the ordered progression of constriction initiations out from a central region and also to delimit the peripheral extent of this spreading. In Drosophila melanogaster (Fruit fly), this protein is Protein folded gastrulation (fog).